The sequence spans 529 residues: Glucose-6-phosphate isomerase (529 aa).

The active-site Proton donor is the glutamate 323. Catalysis depends on residues histidine 352 and lysine 456.

It belongs to the GPI family.

The protein localises to the cytoplasm. The catalysed reaction is alpha-D-glucose 6-phosphate = beta-D-fructose 6-phosphate. The protein operates within carbohydrate biosynthesis; gluconeogenesis. It participates in carbohydrate degradation; glycolysis; D-glyceraldehyde 3-phosphate and glycerone phosphate from D-glucose: step 2/4. Its function is as follows. Catalyzes the reversible isomerization of glucose-6-phosphate to fructose-6-phosphate. The polypeptide is Glucose-6-phosphate isomerase (Geobacter sulfurreducens (strain ATCC 51573 / DSM 12127 / PCA)).